Here is a 78-residue protein sequence, read N- to C-terminus: ATP synthase subunit a (78 aa).

Residues 34–54 (LTNIGLYLTIGIFLILTYSLL) form a helical membrane-spanning segment.

It belongs to the ATPase A chain family. F-type ATPases have 2 components, CF(1) - the catalytic core - and CF(0) - the membrane proton channel. CF(1) has five subunits: alpha(3), beta(3), gamma(1), delta(1), epsilon(1). CF(0) has three main subunits: a, b and c.

Its subcellular location is the mitochondrion inner membrane. In terms of biological role, mitochondrial membrane ATP synthase (F(1)F(0) ATP synthase or Complex V) produces ATP from ADP in the presence of a proton gradient across the membrane which is generated by electron transport complexes of the respiratory chain. F-type ATPases consist of two structural domains, F(1) - containing the extramembraneous catalytic core and F(0) - containing the membrane proton channel, linked together by a central stalk and a peripheral stalk. During catalysis, ATP synthesis in the catalytic domain of F(1) is coupled via a rotary mechanism of the central stalk subunits to proton translocation. Key component of the proton channel; it may play a direct role in the translocation of protons across the membrane. The protein is ATP synthase subunit a (atp6) of Aspergillus amstelodami.